The following is a 629-amino-acid chain: tRNA uridine 5-carboxymethylaminomethyl modification enzyme MnmG (629 aa).

13–18 serves as a coordination point for FAD; that stretch reads GGGHAG. 273 to 287 lines the NAD(+) pocket; it reads GPRYCPSIEDKIHRF.

This sequence belongs to the MnmG family. In terms of assembly, homodimer. Heterotetramer of two MnmE and two MnmG subunits. Requires FAD as cofactor.

The protein resides in the cytoplasm. Functionally, NAD-binding protein involved in the addition of a carboxymethylaminomethyl (cmnm) group at the wobble position (U34) of certain tRNAs, forming tRNA-cmnm(5)s(2)U34. In Shewanella baltica (strain OS223), this protein is tRNA uridine 5-carboxymethylaminomethyl modification enzyme MnmG.